Consider the following 89-residue polypeptide: Ragulator complex protein LAMTOR5 homolog (89 aa).

This sequence belongs to the LAMTOR5 family. As to quaternary structure, part of the Ragulator complex.

The protein localises to the cytoplasm. Its subcellular location is the lysosome. Functionally, regulator of the TOR pathway, a signaling cascade that promotes cell growth in response to growth factors, energy levels, and amino acids. As part of the Ragulator complex, may activate the TOR signaling cascade in response to amino acids. The protein is Ragulator complex protein LAMTOR5 homolog of Dictyostelium discoideum (Social amoeba).